The sequence spans 717 residues: Transport/processing ATP-binding protein ComA (717 aa).

One can recognise a Peptidase C39 domain in the interval 11-138 (QVDQMDCGVA…EEWTGVTLFM (128 aa)). Cys17 is a catalytic residue. The next 6 membrane-spanning stretches (helical) occupy residues 166 to 186 (GLIANIVLATLLVTVINIVGS), 205 to 225 (LGIISIGLVIVYIFQQILSYA), 237 to 257 (LSIDVILSYIKHVFHLPMSFF), 282 to 302 (TILSIFLDVSTVVIISLVLFS), 306 to 326 (NLFFMTLLALPIYTVIIFAFM), and 397 to 417 (VAHLLLNVGILWMGAVLVMDG). In terms of domain architecture, ABC transmembrane type-1 spans 168–450 (IANIVLATLL…IINLQTKLQT (283 aa)). An ABC transporter domain is found at 484 to 717 (MTFKQVHYKY…GGFYAHLVNS (234 aa)). An ATP-binding site is contributed by 517–524 (GISGSGKT).

This sequence belongs to the ABC transporter superfamily. Competence factor exporter (TC 3.A.1.112.1) family.

The protein resides in the cell membrane. Functionally, required for induction of competence. Seems to transport the competence-stimulating peptide (CSP). The polypeptide is Transport/processing ATP-binding protein ComA (comA) (Streptococcus pneumoniae serotype 4 (strain ATCC BAA-334 / TIGR4)).